A 137-amino-acid chain; its full sequence is Large ribosomal subunit protein uL16 (137 aa).

Belongs to the universal ribosomal protein uL16 family. In terms of assembly, part of the 50S ribosomal subunit.

Functionally, binds 23S rRNA and is also seen to make contacts with the A and possibly P site tRNAs. In Bartonella quintana (strain Toulouse) (Rochalimaea quintana), this protein is Large ribosomal subunit protein uL16.